A 181-amino-acid polypeptide reads, in one-letter code: Large ribosomal subunit protein uL5 (181 aa).

The protein belongs to the universal ribosomal protein uL5 family. Part of the 50S ribosomal subunit; contacts the 5S rRNA and probably tRNA. Forms a bridge to the 30S subunit in the 70S ribosome.

In terms of biological role, this is one of the proteins that bind and probably mediate the attachment of the 5S RNA into the large ribosomal subunit, where it forms part of the central protuberance. In the 70S ribosome it contacts protein S13 of the 30S subunit (bridge B1b), connecting the 2 subunits; this bridge is implicated in subunit movement. May contact the P site tRNA; the 5S rRNA and some of its associated proteins might help stabilize positioning of ribosome-bound tRNAs. The chain is Large ribosomal subunit protein uL5 from Methanococcus maripaludis (strain C5 / ATCC BAA-1333).